The following is a 503-amino-acid chain: Probable mitochondrial-processing peptidase subunit alpha-1, mitochondrial (503 aa).

The transit peptide at 1 to 59 (MYRTAASRARALKGVLTRSLRPARYASSSAVAETSSSTPAYLSWLSGGSRAALTSLDMP) directs the protein to the mitochondrion.

It belongs to the peptidase M16 family. Heterodimer of alpha and beta subunits, forming the mitochondrial processing protease (MPP) in which subunit alpha is involved in substrate recognition and binding and subunit beta is the catalytic subunit. Component of the ubiquinol-cytochrome c oxidoreductase (cytochrome b-c1 complex, complex III, CIII), a multisubunit enzyme composed of 10 subunits. The complex is composed of 3 respiratory subunits cytochrome b (MT-CYB), cytochrome c1 (CYC1-1 or CYC1-2) and Rieske protein (UCR1-1 or UCR1-2), 2 core protein subunits MPPalpha1 (or MPPalpha2) and MPPB, and 5 low-molecular weight protein subunits QCR7-1 (or QCR7-2), UCRQ-1 (or UCRQ-2), QCR9, UCRY and probably QCR6-1 (or QCR6-2). The complex exists as an obligatory dimer and forms supercomplexes (SCs) in the inner mitochondrial membrane with NADH-ubiquinone oxidoreductase (complex I, CI), resulting in different assemblies (supercomplexes SCI(1)III(2) and SCI(2)III(4)).

The protein localises to the mitochondrion matrix. The protein resides in the mitochondrion inner membrane. Its function is as follows. Substrate recognition and binding subunit of the essential mitochondrial processing protease (MPP), which cleaves the mitochondrial sequence off newly imported precursors proteins. Component of the ubiquinol-cytochrome c oxidoreductase, a multisubunit transmembrane complex that is part of the mitochondrial electron transport chain which drives oxidative phosphorylation. The respiratory chain contains 3 multisubunit complexes succinate dehydrogenase (complex II, CII), ubiquinol-cytochrome c oxidoreductase (cytochrome b-c1 complex, complex III, CIII) and cytochrome c oxidase (complex IV, CIV), that cooperate to transfer electrons derived from NADH and succinate to molecular oxygen, creating an electrochemical gradient over the inner membrane that drives transmembrane transport and the ATP synthase. The cytochrome b-c1 complex catalyzes electron transfer from ubiquinol to cytochrome c, linking this redox reaction to translocation of protons across the mitochondrial inner membrane, with protons being carried across the membrane as hydrogens on the quinol. In the process called Q cycle, 2 protons are consumed from the matrix, 4 protons are released into the intermembrane space and 2 electrons are passed to cytochrome c. In Arabidopsis thaliana (Mouse-ear cress), this protein is Probable mitochondrial-processing peptidase subunit alpha-1, mitochondrial (MPPalpha1).